The chain runs to 961 residues: Ras-interacting protein 1 (961 aa).

The span at 1–10 (MLSGERKEGG) shows a compositional bias: basic and acidic residues. 3 disordered regions span residues 1–21 (MLSGERKEGGSPRFGKLHLPV), 35–70 (LGRRWPSAASVKSSSSDTGSRSSEPLPPPPPPPHVE), and 96–116 (RGSGAGGAGGPGTPGGAQRWA). Residues 41–57 (SAASVKSSSSDTGSRSS) are compositionally biased toward low complexity. Over residues 59–68 (PLPPPPPPPH) the composition is skewed to pro residues. Arg96 is modified (omega-N-methylarginine). A compositionally biased stretch (gly residues) spans 98–110 (SGAGGAGGPGTPG). The Ras-associating domain occupies 141-253 (PPGVLKIFAS…RRFELRGREE (113 aa)). The interval 261-352 (AFGAADADGT…MAPGAADAQM (92 aa)) is disordered. A phosphoserine mark is found at Ser274 and Ser286. A compositionally biased stretch (low complexity) spans 284 to 295 (AASGGAALASPG). Over residues 296–307 (PGSGSGTPTGSG) the composition is skewed to gly residues. Over residues 314–327 (NLSLRRSVSELSLQ) the composition is skewed to low complexity. A phosphoserine mark is found at Ser320, Ser322, Ser325, and Ser413. The Dilute domain occupies 594–895 (GRLARLIKEA…PPAERDAVDT (302 aa)).

As to quaternary structure, interacts with Ras family members that have been activated by GTP binding. Interacts with HRAS, RAP1A, RAP2, RRAS, RAF1 and RRAS2. Interacts with MYH9 and ARHGAP29. As to expression, detected in kidney, heart, skeletal muscle, small intestine and lung.

The protein resides in the cytoplasm. It is found in the perinuclear region. It localises to the golgi apparatus. Its subcellular location is the golgi stack. Functionally, required for the proper formation of vascular structures that develop via both vasculogenesis and angiogenesis. Acts as a critical and vascular-specific regulator of GTPase signaling, cell architecture, and adhesion, which is essential for endothelial cell morphogenesis and blood vessel tubulogenesis. Regulates the activity of Rho GTPases in part by recruiting ARHGAP29 and suppressing RhoA signaling and dampening ROCK and MYH9 activities in endothelial cells. May act as effector for Golgi-bound HRAS and other Ras-like proteins. May promote HRAS-mediated transformation. Negative regulator of amino acid starvation-induced autophagy. The protein is Ras-interacting protein 1 (Rasip1) of Mus musculus (Mouse).